Consider the following 300-residue polypeptide: Protein TRACHEARY ELEMENT DIFFERENTIATION-RELATED 7A (300 aa).

The tract at residues 1 to 181 (MASPLSQSVF…HIIPPPPPSP (181 aa)) is disordered. The Extracellular portion of the chain corresponds to 1 to 187 (MASPLSQSVF…PPSPSNHSTT (187 aa)). A compositionally biased stretch (pro residues) spans 12–181 (HFPPPSPAAT…HIIPPPPPSP (170 aa)). Asn-183 carries an N-linked (GlcNAc...) asparagine glycan. Residues 188 to 208 (IVVIFVSCGGVFFLAFAMAAL) traverse the membrane as a helical segment. Residues 209–300 (WCFLKKKKKK…SSFGHHYLHG (92 aa)) are Cytoplasmic-facing.

In terms of tissue distribution, accumulates in cells differentiating into tracheary element (TE) which undergo secondary cell wall (SCW) formation.

The protein resides in the cell membrane. It localises to the secreted. The protein localises to the cell wall. Involved in the secondary cell wall (SCW) formation of vessel elements (e.g. protoxylem and metaxylem), thus promoting tracheary element (TE) differentiation. This chain is Protein TRACHEARY ELEMENT DIFFERENTIATION-RELATED 7A, found in Zinnia elegans (Garden zinnia).